Here is a 161-residue protein sequence, read N- to C-terminus: Ribonuclease H (161 aa).

An RNase H type-1 domain is found at 11–152 (GPRPVVIHTD…ADQLARDGLT (142 aa)). Residues D20, E58, D80, and D144 each contribute to the Mg(2+) site. The interval 137-161 (HDENERADQLARDGLTENRMKSRIG) is disordered.

Belongs to the RNase H family. As to quaternary structure, monomer. Requires Mg(2+) as cofactor.

Its subcellular location is the cytoplasm. The catalysed reaction is Endonucleolytic cleavage to 5'-phosphomonoester.. Functionally, endonuclease that specifically degrades the RNA of RNA-DNA hybrids. The sequence is that of Ribonuclease H from Rhodopseudomonas palustris (strain HaA2).